The primary structure comprises 384 residues: Flap endonuclease 1 (384 aa).

The interval 1–108 (MGIHKLMDLL…GELARRQKAK (108 aa)) is N-domain. Residue Asp-34 participates in Mg(2+) binding. Residue Arg-74 coordinates DNA. Positions 90, 162, 164, 183, and 185 each coordinate Mg(2+). The segment at 126-254 (EALKQEQRNL…VNAFKLITEH (129 aa)) is I-domain. Glu-162 contributes to the DNA binding site. DNA is bound by residues Gly-232 and Asp-234. Asp-234 is a binding site for Mg(2+). The disordered stretch occupies residues 340 to 384 (AKEHKGSQTRLNDFFKVQPKDTSSTSKASKKPTNTKSANKKGGKK). Positions 346–354 (SQTRLNDFF) are interaction with PCNA. Residues 359-376 (KDTSSTSKASKKPTNTKS) show a composition bias toward low complexity.

Belongs to the XPG/RAD2 endonuclease family. FEN1 subfamily. In terms of assembly, interacts with PCNA. Three molecules of FEN1 bind to one PCNA trimer with each molecule binding to one PCNA monomer. PCNA stimulates the nuclease activity without altering cleavage specificity. Mg(2+) serves as cofactor. Phosphorylated. Phosphorylation upon DNA damage induces relocalization to the nuclear plasma.

The protein resides in the nucleus. Its subcellular location is the nucleolus. It is found in the nucleoplasm. The protein localises to the mitochondrion. In terms of biological role, structure-specific nuclease with 5'-flap endonuclease and 5'-3' exonuclease activities involved in DNA replication and repair. During DNA replication, cleaves the 5'-overhanging flap structure that is generated by displacement synthesis when DNA polymerase encounters the 5'-end of a downstream Okazaki fragment. It enters the flap from the 5'-end and then tracks to cleave the flap base, leaving a nick for ligation. Also involved in the long patch base excision repair (LP-BER) pathway, by cleaving within the apurinic/apyrimidinic (AP) site-terminated flap. Acts as a genome stabilization factor that prevents flaps from equilibrating into structures that lead to duplications and deletions. Also possesses 5'-3' exonuclease activity on nicked or gapped double-stranded DNA, and exhibits RNase H activity. Also involved in replication and repair of rDNA and in repairing mitochondrial DNA. The polypeptide is Flap endonuclease 1 (Tetrahymena thermophila (strain SB210)).